Consider the following 273-residue polypeptide: MTRLASRFGAANLIRRDRPLTREELFRVVPSVFSEDKHESRSERYTYIPTISLLDSLQREGFQPFFACQTRVRDPGRREHTKHMLRLRREGQITGKQVPEIILLNSHDGTSSYQMLPGLFRAVCQNGLVCGESFGEVRVPHKGDVVSQVIEGAYEVLGIFDRVEEKRDAMQSLLLPPPAQQALAKAALTYRFGEDHQPVTESQILSPRRWQDESNDLWTTYQRIQENLIKGGLSGRNAKGGRSHTRAVRGIDGDVKLNRALWVMAEALLTQLQ.

Belongs to the UPF0380 family.

The protein is UPF0380 protein YafZ (yafZ) of Escherichia coli (strain K12).